We begin with the raw amino-acid sequence, 783 residues long: Polyribonucleotide nucleotidyltransferase 1, mitochondrial (783 aa).

Residues 1–45 constitute a mitochondrion transit peptide; it reads MAACRYCCSCLRLRPLSDGPFLLPRRDRALTQLQVRALWSSAGSR. Residues K250, K264, K285, and K289 each carry the N6-acetyllysine modification. Residue K552 is modified to N6-succinyllysine. Residues 605 to 664 enclose the KH domain; the sequence is PVVETVQVPLSKRAKFVGPGGYNLKKLQAETGVTISQVDEETFSVFAPTPSAMHEARDFI. In terms of domain architecture, S1 motif spans 679 to 750; sequence GAVYTATITE…ADGRMRLSRK (72 aa). Phosphoserine occurs at positions 754 and 782.

The protein belongs to the polyribonucleotide nucleotidyltransferase family. Homotrimer; in free form. Homooligomer. Component of the mitochondrial degradosome (mtEXO) complex which is a heteropentamer containing 2 copies of SUPV3L1 and 3 copies of PNPT1. As part of the mitochondrial degradosome complex, interacts with GRSF1 in an RNA-dependent manner; the interaction enhances the activity of the complex. Interacts with TCL1A; the interaction has no effect on PNPT1 exonuclease activity.

The protein resides in the cytoplasm. It is found in the mitochondrion matrix. The protein localises to the mitochondrion intermembrane space. The enzyme catalyses RNA(n+1) + phosphate = RNA(n) + a ribonucleoside 5'-diphosphate. RNA-binding protein implicated in numerous RNA metabolic processes. Catalyzes the phosphorolysis of single-stranded polyribonucleotides processively in the 3'-to-5' direction. Mitochondrial intermembrane factor with RNA-processing exoribonulease activity. Component of the mitochondrial degradosome (mtEXO) complex, that degrades 3' overhang double-stranded RNA with a 3'-to-5' directionality in an ATP-dependent manner. Involved in the degradation of non-coding mitochondrial transcripts (MT-ncRNA) and tRNA-like molecules. Required for correct processing and polyadenylation of mitochondrial mRNAs. Plays a role as a cytoplasmic RNA import factor that mediates the translocation of small RNA components, like the 5S RNA, the RNA subunit of ribonuclease P and the mitochondrial RNA-processing (MRP) RNA, into the mitochondrial matrix. Plays a role in mitochondrial morphogenesis and respiration; regulates the expression of the electron transport chain (ETC) components at the mRNA and protein levels. In the cytoplasm, shows a 3'-to-5' exoribonuclease mediating mRNA degradation activity; degrades c-myc mRNA upon treatment with IFNB1/IFN-beta, resulting in a growth arrest in melanoma cells. Regulates the stability of specific mature miRNAs in melanoma cells; specifically and selectively degrades miR-221, preferentially. Also plays a role in RNA cell surveillance by cleaning up oxidized RNAs. Binds to the RNA subunit of ribonuclease P, MRP RNA and miR-221 microRNA. The polypeptide is Polyribonucleotide nucleotidyltransferase 1, mitochondrial (Homo sapiens (Human)).